The chain runs to 295 residues: Elongation factor Ts (295 aa).

Positions T79 to V82 are involved in Mg(2+) ion dislocation from EF-Tu.

The protein belongs to the EF-Ts family.

It localises to the cytoplasm. Its function is as follows. Associates with the EF-Tu.GDP complex and induces the exchange of GDP to GTP. It remains bound to the aminoacyl-tRNA.EF-Tu.GTP complex up to the GTP hydrolysis stage on the ribosome. This is Elongation factor Ts from Bacillus mycoides (strain KBAB4) (Bacillus weihenstephanensis).